The sequence spans 973 residues: Valine--tRNA ligase (973 aa).

The 'HIGH' region signature appears at 57–67 (PNVTGSLHMGH). A 'KMSKS' region motif is present at residues 569–573 (KMSKS). Lys572 contributes to the ATP binding site. The stretch at 901–970 (MAGLIDKEAE…AKILEQKIQI (70 aa)) forms a coiled coil.

The protein belongs to the class-I aminoacyl-tRNA synthetase family. ValS type 1 subfamily. In terms of assembly, monomer.

Its subcellular location is the cytoplasm. The enzyme catalyses tRNA(Val) + L-valine + ATP = L-valyl-tRNA(Val) + AMP + diphosphate. Its function is as follows. Catalyzes the attachment of valine to tRNA(Val). As ValRS can inadvertently accommodate and process structurally similar amino acids such as threonine, to avoid such errors, it has a 'posttransfer' editing activity that hydrolyzes mischarged Thr-tRNA(Val) in a tRNA-dependent manner. This Colwellia psychrerythraea (strain 34H / ATCC BAA-681) (Vibrio psychroerythus) protein is Valine--tRNA ligase.